The primary structure comprises 206 residues: Uridine kinase (206 aa).

9–16 (GGSGSGKT) contributes to the ATP binding site.

It belongs to the uridine kinase family.

The protein resides in the cytoplasm. It carries out the reaction uridine + ATP = UMP + ADP + H(+). The enzyme catalyses cytidine + ATP = CMP + ADP + H(+). Its pathway is pyrimidine metabolism; CTP biosynthesis via salvage pathway; CTP from cytidine: step 1/3. The protein operates within pyrimidine metabolism; UMP biosynthesis via salvage pathway; UMP from uridine: step 1/1. This Borrelia garinii subsp. bavariensis (strain ATCC BAA-2496 / DSM 23469 / PBi) (Borreliella bavariensis) protein is Uridine kinase.